We begin with the raw amino-acid sequence, 444 residues long: Phosphoglucosamine mutase (444 aa).

Catalysis depends on S102, which acts as the Phosphoserine intermediate. Mg(2+) contacts are provided by S102, D241, D243, and D245. A Phosphoserine modification is found at S102.

It belongs to the phosphohexose mutase family. Requires Mg(2+) as cofactor. Post-translationally, activated by phosphorylation.

It carries out the reaction alpha-D-glucosamine 1-phosphate = D-glucosamine 6-phosphate. Its function is as follows. Catalyzes the conversion of glucosamine-6-phosphate to glucosamine-1-phosphate. This is Phosphoglucosamine mutase from Leptothrix cholodnii (strain ATCC 51168 / LMG 8142 / SP-6) (Leptothrix discophora (strain SP-6)).